Here is a 304-residue protein sequence, read N- to C-terminus: Glucose-6-phosphate isomerase (304 aa).

Catalysis depends on E146, which acts as the Proton donor. Residue H177 is part of the active site.

This sequence belongs to the GPI family.

It localises to the cytoplasm. The enzyme catalyses alpha-D-glucose 6-phosphate = beta-D-fructose 6-phosphate. Its pathway is carbohydrate degradation; glycolysis; D-glyceraldehyde 3-phosphate and glycerone phosphate from D-glucose: step 2/4. This Calanus finmarchicus (Calanus tonsus) protein is Glucose-6-phosphate isomerase (PGI).